The following is a 421-amino-acid chain: Meiotic fizzy-related protein 1 (421 aa).

The disordered stretch occupies residues 79-107; the sequence is DTPDRKSYSLSPISPQSQDMLRQPQKPKR. Residues 86 to 98 are compositionally biased toward polar residues; sequence YSLSPISPQSQDM. 7 WD repeats span residues 123 to 160, 164 to 203, 206 to 246, 247 to 286, 289 to 331, 333 to 374, and 377 to 416; these read KNDF…VVQL, GATN…SVRS, GHSE…EMMK, VHEQ…PLHK, EHTA…LQNK, DTGS…NIAN, and AHTN…PKEE.

The protein belongs to the WD repeat CDC20/Fizzy family. Interacts with mes1.

Its subcellular location is the nucleus. Its function is as follows. Meiosis-specific activator of the anaphase promoting complex/cyclosome (APC/C). Involved in cdc13 degradation. This chain is Meiotic fizzy-related protein 1 (mfr1), found in Schizosaccharomyces pombe (strain 972 / ATCC 24843) (Fission yeast).